The primary structure comprises 137 residues: Small ribosomal subunit protein uS9 (137 aa).

The disordered stretch occupies residues 100 to 137 (ENRPPLKSEGYLTRDPRAKERKKYGLHKARKAPQYSKR). Residues 118-137 (KERKKYGLHKARKAPQYSKR) are compositionally biased toward basic residues.

Belongs to the universal ribosomal protein uS9 family.

The chain is Small ribosomal subunit protein uS9 from Microcystis aeruginosa (strain NIES-843 / IAM M-2473).